Reading from the N-terminus, the 517-residue chain is MTPADLRQSPPLPPGGPTARTVLQLQGVGKRFPGVVALDGIDLDLRAGEVHAVCGENGAGKSTLMKIISGQYRADDGVVLYDGAPVQFSSATDAQAAGIAIIHQELNLVPHLSVAENIYLAREPKRGPFVDYRALNRAAQLCLQRIGLNVSPTTLVGALSIAQQQMVEIAKALSLDARVLIMDEPTSSLTESETVQLFRIIKELRSEGVAILYISHRLDEMAEIVDRVTVLRDGRHIATSDFASTSVNEIVARMVGRPLDDAYPPRRSTPTDQVLLKVRDLQRTGTFGPVSFELRKGEILGFAGLMGAGRTEVARAIFGAERPDAGSILLGDTPVEINSPREAIRHGIAYLSEDRKKDGLALAMPVAANITLANVAAISSRGFLRFADETAIAERYVRELGIRTPTVAQIARNLSGGNQQKIVISKWLYRGSRILFFDEPTRGIDVGAKYAIYGLMDRLAADGVGVGVVLISSELPELLGMTDRIAVFHEGRITAVLETGKTNQEEILHHASGRSHA.

ABC transporter domains follow at residues 23–258 and 269–515; these read LQLQ…VGRP and TPTD…SGRS. Residue 55–62 participates in ATP binding; it reads GENGAGKS.

Belongs to the ABC transporter superfamily. Carbohydrate importer 2 (CUT2) (TC 3.A.1.2) family.

The protein localises to the cell inner membrane. It catalyses the reaction D-ribose(out) + ATP + H2O = D-ribose(in) + ADP + phosphate + H(+). It carries out the reaction D-galactose(out) + ATP + H2O = D-galactose(in) + ADP + phosphate + H(+). Its function is as follows. Part of an ABC transporter complex involved in carbohydrate import. Could be involved in ribose, galactose and/or methyl galactoside import. Responsible for energy coupling to the transport system. In Burkholderia ambifaria (strain ATCC BAA-244 / DSM 16087 / CCUG 44356 / LMG 19182 / AMMD) (Burkholderia cepacia (strain AMMD)), this protein is Putative ribose/galactose/methyl galactoside import ATP-binding protein 1.